Here is a 181-residue protein sequence, read N- to C-terminus: K99 fimbrial protein (181 aa).

Positions 1–22 are cleaved as a signal peptide; the sequence is MKKTLLAIILGGMAFATTNASA. Cys38 and Cys79 are disulfide-bonded.

The protein belongs to the fimbrial protein family.

The protein resides in the fimbrium. Fimbriae (also called pili), polar filaments radiating from the surface of the bacterium to a length of 0.5-1.5 micrometers and numbering 100-300 per cell, enable bacteria to colonize the epithelium of specific host organs. Its function is as follows. FanC is the main component of the K99 fimbriae. This Escherichia coli protein is K99 fimbrial protein (fanC).